A 422-amino-acid chain; its full sequence is SPbeta prophage-derived glycosyltransferase SunS (422 aa).

The protein belongs to the glycosyltransferase 2 family.

In terms of biological role, transfers a hexose moiety onto 'Cys-41' of bacteriocin sublancin-168 (SunA). Accepts UDP-glucose (UDP-Glc), UDP-N-acetylglucosamine (UDP-GlcNAc), UDP-galactose (UDP-Gal), UDP-xylose (UDP-Xyl) and GDP-mannose as substrate. The polypeptide is SPbeta prophage-derived glycosyltransferase SunS (sunS) (Bacillus subtilis (strain 168)).